The primary structure comprises 282 residues: Aldo-keto reductase MUL_1987 (282 aa).

Tyrosine 57 functions as the Proton donor in the catalytic mechanism. NADPH-binding residues include leucine 197, isoleucine 235, serine 238, threonine 246, asparagine 247, and arginine 273.

It belongs to the aldo/keto reductase family.

The polypeptide is Aldo-keto reductase MUL_1987 (Mycobacterium ulcerans (strain Agy99)).